We begin with the raw amino-acid sequence, 493 residues long: Telomere-binding protein subunit alpha (493 aa).

The interval 1–30 (MSSAKRSTSRVSKKKAAPAKDGAPKKREQS) is disordered. Basic residues predominate over residues 7–17 (STSRVSKKKAA).

It belongs to the telombin family. Heterodimer of an alpha and a beta subunit.

The protein localises to the nucleus. It localises to the chromosome. Its subcellular location is the telomere. Its function is as follows. May function as protective capping of the single-stranded telomeric overhang. May also participate in telomere length regulation during DNA replication. The polypeptide is Telomere-binding protein subunit alpha (STY56V) (Stylonychia mytilus (Ciliate)).